We begin with the raw amino-acid sequence, 308 residues long: Extended-spectrum beta-lactamase PER-1 (308 aa).

A signal peptide spans 1 to 26 (MNVIIKAVVTASTLLMVSFSSFETSA). S71 acts as the Nucleophile; acyl-ester intermediate in catalysis. Residues K74, S135, and E171 each contribute to the a beta-lactam site.

It belongs to the class-A beta-lactamase family. Monomer.

Its subcellular location is the secreted. The catalysed reaction is a beta-lactam + H2O = a substituted beta-amino acid. Its activity is regulated as follows. Inhibited by the beta-lactamase-blocking agents clavulanic acid, tazobactam and sulbactam. Not inhibited by EDTA. Extended-spectrum beta-lactamase (ESBL) which confers resistance to penicillins, as well as first-, second- and third-generation cephalosporins, but not the carbapenem, imipenem, in the JM109 strain of E.coli. Has cefotaxime-hydrolyzing activity. This Pseudomonas aeruginosa protein is Extended-spectrum beta-lactamase PER-1.